The sequence spans 267 residues: Heme-containing CO-sensing transcriptional regulator RcoM 2 (267 aa).

Positions 15-86 constitute a PAS domain; it reads RAETFQHKLE…KSRDKLRFLL (72 aa). Residues His-74 and Met-104 each coordinate heme. Residues 161–266 form the HTH LytTR-type domain; the sequence is IPVYRKSRVI…TAQLKELLGV (106 aa).

The cofactor is heme.

The protein resides in the cytoplasm. Its function is as follows. One-component, b-type heme-containing aerobic sensor and transcriptional regulator that responds to CO by activating the expression of the oxidation operon cox. The protein is Heme-containing CO-sensing transcriptional regulator RcoM 2 (rcoM2) of Paraburkholderia xenovorans (strain LB400).